Here is a 446-residue protein sequence, read N- to C-terminus: UDP-N-acetylmuramoylalanine--D-glutamate ligase (446 aa).

115–121 lines the ATP pocket; it reads GTNGKTT.

Belongs to the MurCDEF family.

It localises to the cytoplasm. The catalysed reaction is UDP-N-acetyl-alpha-D-muramoyl-L-alanine + D-glutamate + ATP = UDP-N-acetyl-alpha-D-muramoyl-L-alanyl-D-glutamate + ADP + phosphate + H(+). It participates in cell wall biogenesis; peptidoglycan biosynthesis. In terms of biological role, cell wall formation. Catalyzes the addition of glutamate to the nucleotide precursor UDP-N-acetylmuramoyl-L-alanine (UMA). The protein is UDP-N-acetylmuramoylalanine--D-glutamate ligase of Trichlorobacter lovleyi (strain ATCC BAA-1151 / DSM 17278 / SZ) (Geobacter lovleyi).